The chain runs to 425 residues: Dihydroorotase (425 aa).

The Zn(2+) site is built by H61 and H63. Substrate-binding positions include 63 to 65 (HLR) and N95. Zn(2+) is bound by residues D153, H180, and H233. N279 is a binding site for substrate. D306 provides a ligand contact to Zn(2+). The active site involves D306. H310 lines the substrate pocket.

This sequence belongs to the metallo-dependent hydrolases superfamily. DHOase family. Class I DHOase subfamily. Requires Zn(2+) as cofactor.

The catalysed reaction is (S)-dihydroorotate + H2O = N-carbamoyl-L-aspartate + H(+). It participates in pyrimidine metabolism; UMP biosynthesis via de novo pathway; (S)-dihydroorotate from bicarbonate: step 3/3. Its function is as follows. Catalyzes the reversible cyclization of carbamoyl aspartate to dihydroorotate. In Trichlorobacter lovleyi (strain ATCC BAA-1151 / DSM 17278 / SZ) (Geobacter lovleyi), this protein is Dihydroorotase.